Reading from the N-terminus, the 661-residue chain is UvrABC system protein B (661 aa).

The Helicase ATP-binding domain occupies 25 to 182 (KGLNNKKRSQ…NDLVNLQYER (158 aa)). Position 38-45 (38-45 (GITGSGKT)) interacts with ATP. Positions 91-114 (YYDYYQPEAYIPKTDVFIEKDSSI) match the Beta-hairpin motif. In terms of domain architecture, Helicase C-terminal spans 430–592 (QVEDLVGEIQ…IIPKTINRTI (163 aa)). In terms of domain architecture, UVR spans 621-656 (KAHIDKLRKEMLKAASNLEFEQAAKLRDQLKTLEEA).

Belongs to the UvrB family. In terms of assembly, forms a heterotetramer with UvrA during the search for lesions. Interacts with UvrC in an incision complex.

Its subcellular location is the cytoplasm. The UvrABC repair system catalyzes the recognition and processing of DNA lesions. A damage recognition complex composed of 2 UvrA and 2 UvrB subunits scans DNA for abnormalities. Upon binding of the UvrA(2)B(2) complex to a putative damaged site, the DNA wraps around one UvrB monomer. DNA wrap is dependent on ATP binding by UvrB and probably causes local melting of the DNA helix, facilitating insertion of UvrB beta-hairpin between the DNA strands. Then UvrB probes one DNA strand for the presence of a lesion. If a lesion is found the UvrA subunits dissociate and the UvrB-DNA preincision complex is formed. This complex is subsequently bound by UvrC and the second UvrB is released. If no lesion is found, the DNA wraps around the other UvrB subunit that will check the other stand for damage. This Rickettsia bellii (strain OSU 85-389) protein is UvrABC system protein B.